A 106-amino-acid polypeptide reads, in one-letter code: UPF0145 protein CPE0882 (106 aa).

Belongs to the UPF0145 family.

The sequence is that of UPF0145 protein CPE0882 from Clostridium perfringens (strain 13 / Type A).